The following is a 104-amino-acid chain: Large ribosomal subunit protein uL24 (104 aa).

It belongs to the universal ribosomal protein uL24 family. As to quaternary structure, part of the 50S ribosomal subunit.

Functionally, one of two assembly initiator proteins, it binds directly to the 5'-end of the 23S rRNA, where it nucleates assembly of the 50S subunit. In terms of biological role, one of the proteins that surrounds the polypeptide exit tunnel on the outside of the subunit. This chain is Large ribosomal subunit protein uL24, found in Buchnera aphidicola subsp. Acyrthosiphon pisum (strain 5A).